Consider the following 411-residue polypeptide: Na(+)-translocating NADH-quinone reductase subunit F (411 aa).

The helical transmembrane segment at 5–25 threads the bilayer; it reads VILALGIAAFTVIVLVLVAII. The 2Fe-2S ferredoxin-type domain occupies 36–130; that stretch reads GDITIDINDD…NMEVELPEEI (95 aa). Cysteine 73, cysteine 79, cysteine 82, and cysteine 114 together coordinate [2Fe-2S] cluster. Positions 133-273 constitute an FAD-binding FR-type domain; sequence VKKWECTVIS…SGPFGEFFAK (141 aa). The catalytic stretch occupies residues 276 to 393; sequence DAEMVFIGGG…PVMNAAVIKM (118 aa).

Belongs to the NqrF family. As to quaternary structure, composed of six subunits; NqrA, NqrB, NqrC, NqrD, NqrE and NqrF. Requires [2Fe-2S] cluster as cofactor. FAD serves as cofactor.

The protein localises to the cell inner membrane. The catalysed reaction is a ubiquinone + n Na(+)(in) + NADH + H(+) = a ubiquinol + n Na(+)(out) + NAD(+). NQR complex catalyzes the reduction of ubiquinone-1 to ubiquinol by two successive reactions, coupled with the transport of Na(+) ions from the cytoplasm to the periplasm. The first step is catalyzed by NqrF, which accepts electrons from NADH and reduces ubiquinone-1 to ubisemiquinone by a one-electron transfer pathway. This Haemophilus influenzae (strain ATCC 51907 / DSM 11121 / KW20 / Rd) protein is Na(+)-translocating NADH-quinone reductase subunit F.